Reading from the N-terminus, the 361-residue chain is Putative geranylgeranyl pyrophosphate synthase 8, chloroplastic (361 aa).

The N-terminal 39 residues, 1 to 39 (MATTVHLSSFSLFIQSRGRRDNSISSVKSLKKRTGLSPS), are a transit peptide targeting the chloroplast. Positions 24–58 (ISSVKSLKKRTGLSPSSALTSQGGRDMIPPQGKSN) are disordered. The span at 36–46 (LSPSSALTSQG) shows a compositional bias: polar residues. Lys-107, Arg-110, and His-139 together coordinate isopentenyl diphosphate. Asp-146 and Asp-152 together coordinate Mg(2+). A dimethylallyl diphosphate-binding site is contributed by Arg-157. Arg-158 serves as a coordination point for isopentenyl diphosphate. Residues Lys-246, Thr-247, Gln-284, Lys-301, and Lys-311 each contribute to the dimethylallyl diphosphate site.

Belongs to the FPP/GGPP synthase family. As to quaternary structure, monomer. Mg(2+) serves as cofactor.

Its subcellular location is the plastid. It localises to the chloroplast. It carries out the reaction isopentenyl diphosphate + dimethylallyl diphosphate = (2E)-geranyl diphosphate + diphosphate. The enzyme catalyses isopentenyl diphosphate + (2E)-geranyl diphosphate = (2E,6E)-farnesyl diphosphate + diphosphate. The catalysed reaction is isopentenyl diphosphate + (2E,6E)-farnesyl diphosphate = (2E,6E,10E)-geranylgeranyl diphosphate + diphosphate. The protein operates within isoprenoid biosynthesis; farnesyl diphosphate biosynthesis; farnesyl diphosphate from geranyl diphosphate and isopentenyl diphosphate: step 1/1. It participates in isoprenoid biosynthesis; geranyl diphosphate biosynthesis; geranyl diphosphate from dimethylallyl diphosphate and isopentenyl diphosphate: step 1/1. Its pathway is isoprenoid biosynthesis; geranylgeranyl diphosphate biosynthesis; geranylgeranyl diphosphate from farnesyl diphosphate and isopentenyl diphosphate: step 1/1. In terms of biological role, catalyzes the trans-addition of the three molecules of IPP onto DMAPP to form geranylgeranyl pyrophosphate. This chain is Putative geranylgeranyl pyrophosphate synthase 8, chloroplastic, found in Arabidopsis thaliana (Mouse-ear cress).